A 52-amino-acid polypeptide reads, in one-letter code: Superoxide dismutase [Cu-Zn] 2 (52 aa).

A Cu cation-binding site is contributed by H44.

Belongs to the Cu-Zn superoxide dismutase family. In terms of assembly, homodimer. Requires Cu cation as cofactor. Zn(2+) is required as a cofactor.

Its subcellular location is the cytoplasm. It catalyses the reaction 2 superoxide + 2 H(+) = H2O2 + O2. Destroys radicals which are normally produced within the cells and which are toxic to biological systems. The sequence is that of Superoxide dismutase [Cu-Zn] 2 from Debaryomyces hansenii (Yeast).